A 447-amino-acid polypeptide reads, in one-letter code: Probable rhamnogalacturonase C (447 aa).

The N-terminal stretch at 1 to 19 (MQVKLFYTLALWAPILVSA) is a signal peptide. 2 N-linked (GlcNAc...) asparagine glycosylation sites follow: asparagine 37 and asparagine 65. Cysteine 40 and cysteine 66 are disulfide-bonded. The active-site Proton donor is the aspartate 217. Residues cysteine 219 and cysteine 236 are joined by a disulfide bond. Residues asparagine 237 and asparagine 252 are each glycosylated (N-linked (GlcNAc...) asparagine). Histidine 291 is an active-site residue. Asparagine 316 is a glycosylation site (N-linked (GlcNAc...) asparagine). 2 disulfides stabilise this stretch: cysteine 338-cysteine 344 and cysteine 366-cysteine 375.

The protein belongs to the glycosyl hydrolase 28 family.

Its subcellular location is the secreted. Pectinolytic enzymes consist of four classes of enzymes: pectine lyase, polygalacturonase, pectin methylesterase and rhamnogalacturonase. Hydrolyzes alpha-D-galacturonopyranosyl-(1,2)-alpha-L-rhamnopyranosyl linkages in the backbone of the hairy regions of pectins. This is Probable rhamnogalacturonase C (rhgC) from Aspergillus flavus (strain ATCC 200026 / FGSC A1120 / IAM 13836 / NRRL 3357 / JCM 12722 / SRRC 167).